Here is a 296-residue protein sequence, read N- to C-terminus: Phosphatidylglycerol--prolipoprotein diacylglyceryl transferase (296 aa).

The next 3 helical transmembrane spans lie at 17 to 37 (LAVRWYGLMYLVGFILAIVVG), 59 to 79 (MMFYGVLGVVLGGRLGYVLFY), and 97 to 117 (GGMSFHGGFLGVTLAMALFAW). Arginine 142 provides a ligand contact to a 1,2-diacyl-sn-glycero-3-phospho-(1'-sn-glycerol). Transmembrane regions (helical) follow at residues 230-250 (MGAISALFLIGYGAARFTVEF) and 265-285 (LSMGQWLSLPMIVAGVLMMIW).

This sequence belongs to the Lgt family.

The protein localises to the cell inner membrane. It catalyses the reaction L-cysteinyl-[prolipoprotein] + a 1,2-diacyl-sn-glycero-3-phospho-(1'-sn-glycerol) = an S-1,2-diacyl-sn-glyceryl-L-cysteinyl-[prolipoprotein] + sn-glycerol 1-phosphate + H(+). It participates in protein modification; lipoprotein biosynthesis (diacylglyceryl transfer). Its function is as follows. Catalyzes the transfer of the diacylglyceryl group from phosphatidylglycerol to the sulfhydryl group of the N-terminal cysteine of a prolipoprotein, the first step in the formation of mature lipoproteins. The protein is Phosphatidylglycerol--prolipoprotein diacylglyceryl transferase of Burkholderia thailandensis (strain ATCC 700388 / DSM 13276 / CCUG 48851 / CIP 106301 / E264).